The primary structure comprises 147 residues: Large ribosomal subunit protein uL15 (147 aa).

The segment at 1 to 45 (MRLEDLRPTPGAMKKRKRVGRGPGSGHGKTSGRGHKGQKARGSGK) is disordered. Positions 30 to 44 (TSGRGHKGQKARGSG) are enriched in basic residues.

The protein belongs to the universal ribosomal protein uL15 family. In terms of assembly, part of the 50S ribosomal subunit.

Binds to the 23S rRNA. The protein is Large ribosomal subunit protein uL15 of Thermotoga sp. (strain RQ2).